The primary structure comprises 294 residues: Indole-3-glycerol phosphate synthase (294 aa).

Belongs to the TrpC family.

It catalyses the reaction 1-(2-carboxyphenylamino)-1-deoxy-D-ribulose 5-phosphate + H(+) = (1S,2R)-1-C-(indol-3-yl)glycerol 3-phosphate + CO2 + H2O. It functions in the pathway amino-acid biosynthesis; L-tryptophan biosynthesis; L-tryptophan from chorismate: step 4/5. The sequence is that of Indole-3-glycerol phosphate synthase from Synechococcus sp. (strain WH7803).